A 211-amino-acid chain; its full sequence is Endonuclease Htp3 (211 aa).

The first 20 residues, 1–20 (MLEVPVWIPILAFAVGLGLG), serve as a signal peptide directing secretion. The RxLR motif lies at 48 to 51 (RTLR). In terms of domain architecture, TNase-like spans 48–198 (RTLRGKVVSV…REKRVNIWSL (151 aa)). Residue aspartate 77 participates in Ca(2+) binding. Arginine 90 is an active-site residue. A Ca(2+)-binding site is contributed by aspartate 95. Active-site residues include glutamate 98 and arginine 138. An N-linked (GlcNAc...) asparagine glycan is attached at asparagine 153. Residues 200–211 (KRETPAQYKARK) are binding to the host cell surface.

It in the N-terminal section; belongs to the RxLR effector family. This sequence in the C-terminal section; belongs to the LCL3 family. In terms of assembly, interacts with the host cell surface endoplasmin gp96, in order to get translocated into to host cell. Interacts with the effector Htp1, in order to get released from vesicles into the host cytosol.

Its subcellular location is the secreted. The protein localises to the host cytoplasm. It localises to the host cytosol. The nuclease activity shows a general salt dependency with a clear reduction by magnesium and sulfate ions. Effector involved in the disease saprolegniosis in salmonids and other freshwater fish, resulting in considerable economic losses in aquaculture. Within the host fish cells, Htp3 is released from vesicles into host cytosol where it degrades nucleic acids. The sequence is that of Endonuclease Htp3 (HTP3) from Saprolegnia parasitica (strain CBS 223.65).